The following is a 480-amino-acid chain: Aspartyl/glutamyl-tRNA(Asn/Gln) amidotransferase subunit B (480 aa).

This sequence belongs to the GatB/GatE family. GatB subfamily. As to quaternary structure, heterotrimer of A, B and C subunits.

The enzyme catalyses L-glutamyl-tRNA(Gln) + L-glutamine + ATP + H2O = L-glutaminyl-tRNA(Gln) + L-glutamate + ADP + phosphate + H(+). It carries out the reaction L-aspartyl-tRNA(Asn) + L-glutamine + ATP + H2O = L-asparaginyl-tRNA(Asn) + L-glutamate + ADP + phosphate + 2 H(+). Its function is as follows. Allows the formation of correctly charged Asn-tRNA(Asn) or Gln-tRNA(Gln) through the transamidation of misacylated Asp-tRNA(Asn) or Glu-tRNA(Gln) in organisms which lack either or both of asparaginyl-tRNA or glutaminyl-tRNA synthetases. The reaction takes place in the presence of glutamine and ATP through an activated phospho-Asp-tRNA(Asn) or phospho-Glu-tRNA(Gln). The sequence is that of Aspartyl/glutamyl-tRNA(Asn/Gln) amidotransferase subunit B from Streptococcus pneumoniae serotype 2 (strain D39 / NCTC 7466).